The sequence spans 1171 residues: Protein diaphanous homolog 3 (1171 aa).

Basic and acidic residues predominate over residues Met-1–Ser-15. Positions Met-1–His-40 are disordered. The short motif at Ser-16 to Leu-39 is the Nuclear localization signal element. The residue at position 47 (Thr-47) is a Phosphothreonine. The residue at position 56 (Ser-56) is a Phosphoserine. Residues Pro-60 to Ala-95 form a disordered region. A compositionally biased stretch (low complexity) spans Ser-76–Ser-86. A GBD/FH3 domain is found at Pro-93–Asp-455. Ser-154 bears the Phosphoserine mark. 2 coiled-coil regions span residues Glu-373–Leu-403 and Gln-478–Leu-533. The disordered stretch occupies residues Ala-532–Gly-601. An FH1 domain is found at Pro-540 to Pro-610. Residues Ala-553–Leu-596 are compositionally biased toward pro residues. Ser-604 carries the post-translational modification Phosphoserine. The region spanning Pro-615 to Arg-1013 is the FH2 domain. 2 coiled-coil regions span residues Asp-887–Phe-918 and Met-988–Thr-1038. One can recognise a DAD domain in the interval Asp-1036–Asp-1066. Phosphoserine occurs at positions 1072 and 1157. The Nuclear export signal signature appears at Glu-1162 to Leu-1171.

The protein belongs to the formin homology family. Diaphanous subfamily. In terms of processing, ubiquitinated.

It is found in the cytoplasm. The protein resides in the nucleus. Its function is as follows. Actin nucleation and elongation factor required for the assembly of F-actin structures, such as actin cables and stress fibers. Required for cytokinesis, stress fiber formation and transcriptional activation of the serum response factor. Binds to GTP-bound form of Rho and to profilin: acts in a Rho-dependent manner to recruit profilin to the membrane, where it promotes actin polymerization. DFR proteins couple Rho and Src tyrosine kinase during signaling and the regulation of actin dynamics. Also acts as an actin nucleation and elongation factor in the nucleus by promoting nuclear actin polymerization inside the nucleus to drive serum-dependent SRF-MRTFA activity. In Mus musculus (Mouse), this protein is Protein diaphanous homolog 3 (Diaph3).